A 350-amino-acid polypeptide reads, in one-letter code: Calcium uniporter protein, mitochondrial (350 aa).

The N-terminal 49 residues, 1–49 (MAAAAGRSLLLLLCSRGGGGGAGGCGALTAGCFPGLGVSRHRPHQQHRT), are a transit peptide targeting the mitochondrion. The Mitochondrial matrix segment spans residues 50–232 (AHQRPASWQS…ISRKAEKRTT (183 aa)). Residues Ser-56 and Ser-91 each carry the phosphoserine; by CaMK2 modification. Residues 74–164 (VTVVYQNGLP…LTYHVRPPKR (91 aa)) are N-terminal MCU domain. Cys-96 carries the S-glutathionyl cysteine modification. The stretch at 191-220 (IEQHQLNKERELVERLEDLKQQLAPLEKVR) forms a coiled coil. Residues 233-256 (LVLWGGLAYMATQFGILARLTWWE) traverse the membrane as a helical segment. Residues 257–264 (YSWDIMEP) are Mitochondrial intermembrane-facing. Positions 259–267 (WDIMEPVTY) match the Selectivity filter motif. Residue Glu-263 coordinates Ca(2+). The chain crosses the membrane as a helical span at residues 265-282 (VTYFITYGSAMAMYAYFV). At 283-350 (MTRQEYVYPE…LPLRQIGEKE (68 aa)) the chain is on the mitochondrial matrix side. The tract at residues 284–289 (TRQEYV) is juxtamembrane helix. Positions 310–338 (RFDLEKYNQLKDAIAQAEMDLKRLRDPLQ) form a coiled coil. Lys-331 bears the N6-acetyllysine mark.

It belongs to the MCU (TC 1.A.77) family. Homotetramer. Component of the uniplex complex, composed of MCU, EMRE/SMDT1, MICU1 and MICU2 (or MICU3) in a 4:4:1:1 stoichiometry. Interacts with CCDC109B/MCUB; this inhibits channel activity. Interacts with MCUR1. Interactions with MICU1 and MCUR1 are mutually exclusive. Interacts with SLC25A23. Post-translationally, phosphorylation by CaMK2 in heart leads to increased MCU current. The regulation of MCU by CaMK2 is however subject to discussion: another group was unable to reproduce these results. Phosphorylated on tyrosines by PTK2B/PYK2, promoting oligomerization. Glutathionylation at Cys-96 in response to reactive oxygen species (ROS) promotes MCU higher-order assembly, leading to constitutive activation of the MCU channel and mitochondrial calcium overload. In terms of processing, undergoes proteolytic degradation by SPG7. Detected in heart muscle (at protein level). Expressed in skeletal muscle, heart, kidney, liver, brain, lung, white fat and spleen.

It localises to the mitochondrion inner membrane. It catalyses the reaction Ca(2+)(in) = Ca(2+)(out). Its activity is regulated as follows. MCU channel activity is regulated by the heterodimer composed of MICU1 and either MICU2 or MICU3, which act as calcium-sensors. At low calcium levels, MICU1 occludes the pore of the MCU channel, preventing mitochondrial calcium uptake. At higher calcium levels, calcium-binding to MICU1 and MICU2 (or MICU3) induces a conformational change that weakens MCU-MICU1 interactions and moves the MICU1-MICU2 heterodimer away from the pore, allowing calcium permeation through the channel. MCU channel activity is gated by EMRE/SMDT1 via the juxtamembrane helix loop. Inhibited by ruthenium red or its derivative Ru360. Channel-forming and calcium-conducting subunit of the mitochondrial inner membrane calcium uniporter complex (uniplex), which mediates calcium uptake into the mitochondrial matrix. MCU channel activity is regulated by the calcium-sensor subunits of the uniplex MICU1 and MICU2 (or MICU3). Mitochondrial calcium homeostasis plays key roles in cellular physiology and regulates ATP production, cytoplasmic calcium signals and activation of cell death pathways. Involved in buffering the amplitude of systolic calcium rises in cardiomyocytes. While dispensable for baseline homeostatic cardiac function, acts as a key regulator of short-term mitochondrial calcium loading underlying a 'fight-or-flight' response during acute stress: acts by mediating a rapid increase of mitochondrial calcium in pacemaker cells. Participates in mitochondrial permeability transition during ischemia-reperfusion injury. Mitochondrial calcium uptake in skeletal muscle cells is involved in muscle size in adults. Regulates synaptic vesicle endocytosis kinetics in central nerve terminal. Regulates glucose-dependent insulin secretion in pancreatic beta-cells by regulating mitochondrial calcium uptake. Involved in antigen processing and presentation. This Mus musculus (Mouse) protein is Calcium uniporter protein, mitochondrial.